Consider the following 1372-residue polypeptide: Collagen alpha-2(I) chain (1372 aa).

The first 22 residues, 1 to 22, serve as a signal peptide directing secretion; the sequence is MLSFVDTRTLLLLAVTSCLATC. Glutamine 23 carries the post-translational modification Pyrrolidone carboxylic acid. Residues 23-85 constitute a propeptide, N-terminal propeptide; that stretch reads QSLQMGSVRK…PPGLTGNFAA (63 aa). Residues 28 to 1135 form a disordered region; that stretch reads GSVRKGPTGD…DQPRSQPSLR (1108 aa). The span at 59 to 77 shows a compositional bias: pro residues; the sequence is VGPPGPPGAPGPPGPPGPP. Pyrrolidone carboxylic acid is present on glutamine 86. Lysine 90 carries the allysine modification. Residues 95–146 are compositionally biased toward low complexity; the sequence is GPGPMGLMGPRGPPGAVGAPGPQGFQGPAGEPGEPGQTGPAGSRGPAGPPGK. The span at 147–161 shows a compositional bias: basic and acidic residues; the sequence is AGEDGHPGKPGRPGE. Position 183 is a 5-hydroxylysine; alternate (lysine 183). Residue lysine 183 is glycosylated (O-linked (Gal...) hydroxylysine; alternate). Low complexity-rich tracts occupy residues 231 to 260, 285 to 299, 306 to 327, 336 to 348, 390 to 416, 476 to 495, and 519 to 537; these read VGAPGPAGARGSDGSVGPVGPAGPIGSAGP, AGPRGEAGLPGLSGP, PGANGLTGAKGATGLPGVAGAP, PGPVGAAGATGPR, PGEPGSAGPAGPPGLRGSPGSRGLPGA, LPGIDGRPGPIGPAGPRGEA, and PGLAGARGAPGPDGNNGAQ. The span at 544–553 shows a compositional bias: gly residues; sequence GVQGGKGEQG. Over residues 600 to 639 the composition is skewed to low complexity; that stretch reads PGESGAAGPSGPIGIRGPSGAPGPDGNKGEAGAVGAPGSA. The segment covering 640 to 649 has biased composition (gly residues); sequence GASGPGGLPG. Composition is skewed to low complexity over residues 674-716 and 725-743; these read NPGR…PRGS and PAGPNGFAGPAGSAGQPGA. The span at 744–753 shows a compositional bias: basic and acidic residues; that stretch reads KGEKGTKGPK. Residues 755–771 are compositionally biased toward low complexity; sequence ENGIVGPTGPVGAAGPS. The span at 781–790 shows a compositional bias: gly residues; sequence GSRGDGGPPG. The Cell attachment site motif lies at 783–785; it reads RGD. Positions 792–801 are enriched in low complexity; the sequence is TGFPGAAGRT. A Cell attachment site motif is present at residues 828–830; it reads RGD. Composition is skewed to low complexity over residues 855–882, 891–927, 957–978, and 987–1007; these read SGEPGTTGPPGTAGPQGLLGAPGILGLP, PGIAGALGEPGPLGIAGPPGARGPPGAVGSPGVNGAP, PGNIGPTGAAGAPGPHGSVGPA, and PGPAGSVGPVGAVGPRGPSGP. A Cell attachment site motif is present at residues 1011–1013; sequence RGD. Over residues 1011–1022 the composition is skewed to basic and acidic residues; it reads RGDKGEPGDKGA. Residues 1095 to 1107 show a composition bias toward pro residues; sequence AGPPGPPGPPGPP. The segment covering 1108 to 1120 has biased composition (gly residues); it reads GVSGGGYDFGFEG. Residues 1126-1372 constitute a propeptide, C-terminal propeptide; sequence DQPRSQPSLR…RVEVGPVCFK (247 aa). Residues 1139–1372 form the Fibrillar collagen NC1 domain; that stretch reads YEVDATLKSL…RVEVGPVCFK (234 aa). 3 cysteine pairs are disulfide-bonded: cysteine 1169–cysteine 1201, cysteine 1209–cysteine 1370, and cysteine 1278–cysteine 1323. 5 residues coordinate Ca(2+): aspartate 1187, asparagine 1189, glutamine 1190, cysteine 1192, and aspartate 1195. N-linked (GlcNAc...) asparagine glycosylation is present at asparagine 1273.

It belongs to the fibrillar collagen family. Trimers of one alpha 2(I) and two alpha 1(I) chains. Interacts (via C-terminus) with TMEM131 (via PapD-L domain); the interaction is direct and is involved in assembly and TRAPPIII ER-to-Golgi transport complex-dependent secretion of collagen. Post-translationally, proline residues at the third position of the tripeptide repeating unit (G-X-P) are hydroxylated in some or all of the chains. Proline residues at the second position of the tripeptide repeating unit (G-P-X) are hydroxylated in some of the chains. As to expression, forms the fibrils of tendon, ligaments and bones. In bones the fibrils are mineralized with calcium hydroxyapatite. Expressed in flagella of epididymal sperm.

The protein resides in the secreted. It localises to the extracellular space. It is found in the extracellular matrix. In terms of biological role, type I collagen is a member of group I collagen (fibrillar forming collagen). The protein is Collagen alpha-2(I) chain (Col1a2) of Rattus norvegicus (Rat).